The primary structure comprises 497 residues: Delayed-rectifier potassium channel regulatory subunit KCNS1 (497 aa).

Over 1 to 186 (MVSEFPGPGS…LTMENPGYSL (186 aa)) the chain is Cytoplasmic. A helical transmembrane segment spans residues 187 to 208 (PSKLFSCVSIGVVLASIAAMCI). Residues 209-239 (HSLPEYQAREAAAAVAAVAAGRSAEDVRDDP) are Extracellular-facing. Residues 240–262 (VLRRLEYFCIAWFSFEVSSRLLL) form a helical membrane-spanning segment. Topologically, residues 263-273 (APSTRNFFCHP) are cytoplasmic. Residues 274-291 (LNLIDIVSVLPFYLTLLA) traverse the membrane as a helical segment. The Extracellular segment spans residues 292–309 (GAALGDRRGASGEELGDL). The chain crosses the membrane as a helical; Voltage-sensor span at residues 310-330 (GKVVQVFRLMRIFRVLKLARH). Residues 331 to 345 (STGLRSLGATLKHSY) lie on the Cytoplasmic side of the membrane. Residues 346–367 (REVGILLLYLAVGVSVFSGVAY) traverse the membrane as a helical segment. The Extracellular portion of the chain corresponds to 368 to 379 (TAEEKNVGFDTI). Positions 380–391 (PACWWWGTVSMT) form an intramembrane region, helical. A Selectivity filter motif is present at residues 392–397 (TVGYGD). The stretch at 392 to 399 (TVGYGDVV) is an intramembrane region. Residues 400–406 (PETVAGK) are Extracellular-facing. The chain crosses the membrane as a helical span at residues 407–435 (LAASGCILGGILVVALPITIIFNKFSHFY). Over 436 to 497 (RRQKALEAAV…PSEPAKSHSY (62 aa)) the chain is Cytoplasmic. The interval 464-497 (SDVSLETSRETSQEGRSTDLETQAPSEPAKSHSY) is disordered. Positions 470 to 482 (TSRETSQEGRSTD) are enriched in basic and acidic residues.

The protein belongs to the potassium channel family. S (TC 1.A.1.2) subfamily. Kv9.1/KCNS1 sub-subfamily. As to quaternary structure, heterotetramer with KCNB1. Heterotetramer with KCNB2. Does not form homomultimers. Highly expressed in brain, but not in the other tissues tested.

The protein localises to the cell membrane. In terms of biological role, potassium channel regulatory subunit that modulate the delayed rectifier voltage-gated potassium channel activity of KCNB1 and KCNB2 by altering their kinetics, expression levels, and shifting the half-inactivation potential to more polarized values. While it does not form functional channels on its own, it can form functional heterotetrameric channels with KCNB1 and KCNB2. Each regulatory subunit has unique regulatory properties that can lead to extensive inhibition, significant changes in kinetics, and/or substantial shifts in the voltage dependencies of the inactivation process. This is Delayed-rectifier potassium channel regulatory subunit KCNS1 from Rattus norvegicus (Rat).